Reading from the N-terminus, the 171-residue chain is Adenine phosphoribosyltransferase (171 aa).

The protein belongs to the purine/pyrimidine phosphoribosyltransferase family. As to quaternary structure, homodimer.

It localises to the cytoplasm. The catalysed reaction is AMP + diphosphate = 5-phospho-alpha-D-ribose 1-diphosphate + adenine. It functions in the pathway purine metabolism; AMP biosynthesis via salvage pathway; AMP from adenine: step 1/1. In terms of biological role, catalyzes a salvage reaction resulting in the formation of AMP, that is energically less costly than de novo synthesis. This is Adenine phosphoribosyltransferase from Mycoplasmopsis fermentans (strain ATCC 19989 / NBRC 14854 / NCTC 10117 / PG18) (Mycoplasma fermentans).